Reading from the N-terminus, the 46-residue chain is Protein PsbN (46 aa).

A helical membrane pass occupies residues Thr5–Phe27.

Belongs to the PsbN family.

It localises to the plastid membrane. In terms of biological role, may play a role in photosystem I and II biogenesis. The protein is Protein PsbN of Cuscuta obtusiflora (Peruvian dodder).